A 364-amino-acid polypeptide reads, in one-letter code: Chorismate synthase (364 aa).

Arg-47 contacts NADP(+). FMN-binding positions include Arg-125–Ser-127, Gly-285, Lys-300–Ser-304, and Arg-327.

It belongs to the chorismate synthase family. In terms of assembly, homotetramer. The cofactor is FMNH2.

The enzyme catalyses 5-O-(1-carboxyvinyl)-3-phosphoshikimate = chorismate + phosphate. It functions in the pathway metabolic intermediate biosynthesis; chorismate biosynthesis; chorismate from D-erythrose 4-phosphate and phosphoenolpyruvate: step 7/7. Its function is as follows. Catalyzes the anti-1,4-elimination of the C-3 phosphate and the C-6 proR hydrogen from 5-enolpyruvylshikimate-3-phosphate (EPSP) to yield chorismate, which is the branch point compound that serves as the starting substrate for the three terminal pathways of aromatic amino acid biosynthesis. This reaction introduces a second double bond into the aromatic ring system. This is Chorismate synthase from Dehalococcoides mccartyi (strain ATCC BAA-2266 / KCTC 15142 / 195) (Dehalococcoides ethenogenes (strain 195)).